The primary structure comprises 467 residues: Probable circularly permuted 1,3-beta-glucanase TOS1 (467 aa).

Residues 1–21 form the signal peptide; sequence MKFSSTTLLAGLSSLTATVSA. The segment covering 158–172 has biased composition (low complexity); the sequence is PAVSSAAADDNANSG. Disordered stretches follow at residues 158–187 and 200–223; these read PAVSSAAADDNANSGSGSGSSAGSGSGYGS and SDISTKSAPTSTSAQPSSSETASV. Positions 173–185 are enriched in gly residues; sequence SGSGSSAGSGSGY. Residues 203–222 are compositionally biased toward low complexity; sequence STKSAPTSTSAQPSSSETAS. Residues 374–379 carry the ExDxxE motif motif; that stretch reads ELDLFE. The disordered stretch occupies residues 391–413; sequence HLHDGQGSSQNSNNGGGGSQDYF.

This sequence belongs to the PGA52 family. Cleaved by KEX2 in vitro.

It localises to the secreted. The enzyme catalyses Hydrolysis of (1-&gt;3)-beta-D-glucosidic linkages in (1-&gt;3)-beta-D-glucans.. In terms of biological role, probable circularly permuted 1,3-beta-glucanase involved in cell wall modification through beta-1,3-glucan network alterations such as increased branching or remodeling. Plays a role in engulfment by host macrophages. The sequence is that of Probable circularly permuted 1,3-beta-glucanase TOS1 from Candida albicans (strain SC5314 / ATCC MYA-2876) (Yeast).